Consider the following 301-residue polypeptide: Phosphoglycolate phosphatase 2 (301 aa).

D19 (nucleophile) is an active-site residue.

Belongs to the HAD-like hydrolase superfamily. CbbY/CbbZ/Gph/YieH family.

The catalysed reaction is 2-phosphoglycolate + H2O = glycolate + phosphate. In terms of biological role, dephosphorylates 2-phosphoglycolate, but does not contribute to photorespiratory metabolism. This chain is Phosphoglycolate phosphatase 2 (PGLP2), found in Arabidopsis thaliana (Mouse-ear cress).